The following is a 134-amino-acid chain: Profilin-2 (134 aa).

A disulfide bond links Cys13 and Cys118. The Involved in PIP2 interaction signature appears at 84-100 (AVIRGKKGSGGITIKKT). At Thr114 the chain carries Phosphothreonine.

Belongs to the profilin family. Occurs in many kinds of cells as a complex with monomeric actin in a 1:1 ratio. Post-translationally, phosphorylated by MAP kinases.

Its subcellular location is the cytoplasm. It is found in the cytoskeleton. Its function is as follows. Binds to actin and affects the structure of the cytoskeleton. At high concentrations, profilin prevents the polymerization of actin, whereas it enhances it at low concentrations. This Olea europaea (Common olive) protein is Profilin-2.